The sequence spans 580 residues: Mitogen-activated protein kinase 12 (580 aa).

The segment at 18–38 (RTASGSNQSSNAGEEAASSDL) is disordered. The segment covering 20–29 (ASGSNQSSNA) has biased composition (polar residues). The region spanning 87–378 (YQIQEVIGKG…AEEALADPYF (292 aa)) is the Protein kinase domain. Residues 93 to 101 (IGKGSYGVV) and Lys-116 each bind ATP. Asp-213 serves as the catalytic Proton acceptor. Thr-249 is subject to Phosphothreonine. The TXY signature appears at 249 to 251 (TDY). A Phosphotyrosine modification is found at Tyr-251. Positions 325-506 (ARRYLSTMRK…SADSVARTTV (182 aa)) are required for kinase activity and nuclear localization. The disordered stretch occupies residues 458 to 580 (YSKGERGSPL…LSEQVSRMHS (123 aa)). Positions 502–543 (ARTTVSPPMSQDAQQHGSAGQNGVTSTDLSSRSYLKSASISA) are enriched in polar residues. Residues 554-566 (EPEDDYISEEMEG) show a composition bias toward acidic residues.

This sequence belongs to the protein kinase superfamily. CMGC Ser/Thr protein kinase family. MAP kinase subfamily. Interacts with EREBP1. Post-translationally, dually phosphorylated on Thr-249 and Tyr-251, which activates the enzyme. Phosphorylated on tyrosine residue.

The protein localises to the cytoplasm. The protein resides in the nucleus. The catalysed reaction is L-seryl-[protein] + ATP = O-phospho-L-seryl-[protein] + ADP + H(+). The enzyme catalyses L-threonyl-[protein] + ATP = O-phospho-L-threonyl-[protein] + ADP + H(+). Activated by threonine and tyrosine phosphorylation. Activated in response to hydrogen peroxide, salicylic acid, jasmonic acid, ethylene, fungal elicitor and infection with rice blast fungus (M.grisea). Functionally, may be involved in defense signaling pathway. Phosphorylates EREBP1 transcriptional activator in vitro. Enhances DNA-binding activity of EREBP1 to the GCC box element of pathogenesis-related (PR) gene promoters. The polypeptide is Mitogen-activated protein kinase 12 (MPK12) (Oryza sativa subsp. japonica (Rice)).